A 337-amino-acid polypeptide reads, in one-letter code: Ribosomal RNA small subunit methyltransferase C (337 aa).

It belongs to the methyltransferase superfamily. RsmC family. As to quaternary structure, monomer.

It is found in the cytoplasm. It carries out the reaction guanosine(1207) in 16S rRNA + S-adenosyl-L-methionine = N(2)-methylguanosine(1207) in 16S rRNA + S-adenosyl-L-homocysteine + H(+). Functionally, specifically methylates the guanine in position 1207 of 16S rRNA in the 30S particle. The polypeptide is Ribosomal RNA small subunit methyltransferase C (Proteus mirabilis (strain HI4320)).